Consider the following 132-residue polypeptide: Large ribosomal subunit protein bL17 (132 aa).

It belongs to the bacterial ribosomal protein bL17 family. As to quaternary structure, part of the 50S ribosomal subunit. Contacts protein L32.

The chain is Large ribosomal subunit protein bL17 from Polaromonas sp. (strain JS666 / ATCC BAA-500).